The following is a 1807-amino-acid chain: Phospholipase D (1807 aa).

Residues 1 to 28 (MPGPDDDVREPTAAARTNNSGYGLRAAP) form a disordered region. 3 helical membrane passes run 257–277 (IAFV…IVTS), 305–325 (AGVF…VFVY), and 587–607 (VYYI…GFLA). The interval 697–734 (TASRMGTGNLAPASSRVDSSTQSEDSFEAPKPPPSSVS) is disordered. PLD phosphodiesterase domains are found at residues 853-880 (GFWS…CFGR) and 1249-1276 (EQIY…NDRS). Catalysis depends on residues His858, Lys860, Asp865, His1254, Lys1256, and Asp1261. Polar residues-rich tracts occupy residues 1531–1547 (FSRS…SQLD), 1568–1578 (YNSNSMPSNAS), and 1597–1614 (YPNS…QSPA). The tract at residues 1531 to 1621 (FSRSNSVSTP…SPAIATGARS (91 aa)) is disordered.

This sequence belongs to the phospholipase D family. TM-PLD subfamily.

The protein resides in the membrane. It catalyses the reaction a 1,2-diacyl-sn-glycero-3-phosphocholine + H2O = a 1,2-diacyl-sn-glycero-3-phosphate + choline + H(+). Its function is as follows. Hydrolyzes glycerol-phospholipids at the terminal phosphodiesteric bond. In Phytophthora infestans (Potato late blight agent), this protein is Phospholipase D.